Reading from the N-terminus, the 224-residue chain is Cytidylate kinase (224 aa).

ATP is bound at residue 13–21 (GPSASGKGT).

Belongs to the cytidylate kinase family. Type 1 subfamily.

The protein localises to the cytoplasm. It catalyses the reaction CMP + ATP = CDP + ADP. It carries out the reaction dCMP + ATP = dCDP + ADP. The polypeptide is Cytidylate kinase (Nitrosomonas eutropha (strain DSM 101675 / C91 / Nm57)).